The sequence spans 211 residues: Claudin-7 (211 aa).

Residues Met-1 to Gln-7 are Cytoplasmic-facing. The chain crosses the membrane as a helical span at residues Leu-8–Pro-28. Topologically, residues Gln-29–Arg-81 are extracellular. Residues Ala-82–Met-102 form a helical membrane-spanning segment. Residues Lys-103–Ala-119 are Cytoplasmic-facing. A helical membrane pass occupies residues Met-120 to Ile-140. Over Gly-141 to Glu-160 the chain is Extracellular. Residues Phe-161–Leu-181 traverse the membrane as a helical segment. Topologically, residues Leu-182–Val-211 are cytoplasmic. Residues Tyr-210–Val-211 are interactions with TJP1, TJP2 and TJP3.

The protein belongs to the claudin family. Directly interacts with TJP1/ZO-1, TJP2/ZO-2 and TJP3/ZO-3. The phosphorylated form interacts with EPCAM. In terms of processing, phosphorylated. Expressed predominantly in lung and kidney.

It is found in the cell membrane. It localises to the basolateral cell membrane. Its subcellular location is the cell junction. The protein resides in the tight junction. Its function is as follows. Plays a major role in tight junction-specific obliteration of the intercellular space, through calcium-independent cell-adhesion activity. The protein is Claudin-7 (Cldn7) of Mus musculus (Mouse).